The primary structure comprises 123 residues: MPTIQQLVRKGRHDKTAKVATAALKGSPQRRGVCTRVYTTTPKKPNSALRKVARVRLTSGIEVSAYIPGEGHNLQEHSMVLVRGGRVKDLPGVRYKIIRGALDTQGVKDRKQARSRYGAKKEK.

It belongs to the universal ribosomal protein uS12 family. Part of the 30S ribosomal subunit. Contacts proteins S8 and S17. May interact with IF1 in the 30S initiation complex.

In terms of biological role, with S4 and S5 plays an important role in translational accuracy. Interacts with and stabilizes bases of the 16S rRNA that are involved in tRNA selection in the A site and with the mRNA backbone. Located at the interface of the 30S and 50S subunits, it traverses the body of the 30S subunit contacting proteins on the other side and probably holding the rRNA structure together. The combined cluster of proteins S8, S12 and S17 appears to hold together the shoulder and platform of the 30S subunit. This Corynebacterium diphtheriae (strain ATCC 700971 / NCTC 13129 / Biotype gravis) protein is Small ribosomal subunit protein uS12.